Here is a 422-residue protein sequence, read N- to C-terminus: 4-hydroxy-3-methylbut-2-en-1-yl diphosphate synthase (flavodoxin) (422 aa).

Positions 316, 319, 362, and 369 each coordinate [4Fe-4S] cluster.

It belongs to the IspG family. [4Fe-4S] cluster serves as cofactor.

It carries out the reaction (2E)-4-hydroxy-3-methylbut-2-enyl diphosphate + oxidized [flavodoxin] + H2O + 2 H(+) = 2-C-methyl-D-erythritol 2,4-cyclic diphosphate + reduced [flavodoxin]. The protein operates within isoprenoid biosynthesis; isopentenyl diphosphate biosynthesis via DXP pathway; isopentenyl diphosphate from 1-deoxy-D-xylulose 5-phosphate: step 5/6. Its function is as follows. Converts 2C-methyl-D-erythritol 2,4-cyclodiphosphate (ME-2,4cPP) into 1-hydroxy-2-methyl-2-(E)-butenyl 4-diphosphate. The chain is 4-hydroxy-3-methylbut-2-en-1-yl diphosphate synthase (flavodoxin) from Ehrlichia ruminantium (strain Welgevonden).